The chain runs to 245 residues: Orotidine 5'-phosphate decarboxylase (245 aa).

Substrate is bound by residues aspartate 22, lysine 44, 71-80, threonine 131, arginine 192, glutamine 201, glycine 221, and arginine 222; that span reads DLKFHDIPNT. Lysine 73 (proton donor) is an active-site residue.

This sequence belongs to the OMP decarboxylase family. Type 1 subfamily. In terms of assembly, homodimer.

It carries out the reaction orotidine 5'-phosphate + H(+) = UMP + CO2. It functions in the pathway pyrimidine metabolism; UMP biosynthesis via de novo pathway; UMP from orotate: step 2/2. Catalyzes the decarboxylation of orotidine 5'-monophosphate (OMP) to uridine 5'-monophosphate (UMP). The chain is Orotidine 5'-phosphate decarboxylase from Salmonella paratyphi A (strain ATCC 9150 / SARB42).